The chain runs to 188 residues: MATIGMGDIKKNIRLIIGEVPCKVIEFQHVKPGKGAAFVRMKAKSFLNGRVFEKTVHAGDKFEVPEITFKTMQYLYDDGEQYQFMDNDSYEQIGLSYEQCDDASKWFKDGIQVDMIFYKGNAISVSAPEVMELLITDTPPNFKGDTSSGSKKPATLETGAVVQVPYHVLEGDTIRVNTVDCEYLEKVK.

Belongs to the elongation factor P family.

Its subcellular location is the cytoplasm. The protein operates within protein biosynthesis; polypeptide chain elongation. Involved in peptide bond synthesis. Stimulates efficient translation and peptide-bond synthesis on native or reconstituted 70S ribosomes in vitro. Probably functions indirectly by altering the affinity of the ribosome for aminoacyl-tRNA, thus increasing their reactivity as acceptors for peptidyl transferase. This is Elongation factor P from Sulfurimonas denitrificans (strain ATCC 33889 / DSM 1251) (Thiomicrospira denitrificans (strain ATCC 33889 / DSM 1251)).